We begin with the raw amino-acid sequence, 777 residues long: Ethylene receptor 4 (777 aa).

3 consecutive transmembrane segments (helical) span residues 49 to 69 (LLIA…ATCA), 77 to 97 (AVLH…LAAF), and 113 to 133 (AAKV…LTFI). Residues Cys88 and His92 each coordinate Cu cation. The GAF domain maps to 184 to 344 (DAHAILRTTA…VVADQAAVAL (161 aa)). In terms of domain architecture, Histidine kinase spans 387 to 521 (AMCHAMRRPV…NTGSGACRLS (135 aa)). His390 bears the Phosphohistidine; by autocatalysis mark. The Response regulatory domain maps to 645 to 774 (RVLLADDDAM…ALGAQLCRVL (130 aa)). Asp696 bears the 4-aspartylphosphate mark.

It belongs to the ethylene receptor family. Cu cation serves as cofactor.

The protein resides in the endoplasmic reticulum membrane. It carries out the reaction ATP + protein L-histidine = ADP + protein N-phospho-L-histidine.. Functionally, ethylene receptor related to bacterial two-component regulators. Acts as a redundant negative regulator of ethylene signaling. In Oryza sativa subsp. japonica (Rice), this protein is Ethylene receptor 4 (ETR4).